The primary structure comprises 394 residues: Upstream-binding factor 1-like protein 1 (394 aa).

The HMG box 1 DNA-binding region spans 101 to 169 (PKRPLTAYLR…DFQKKMRQFK (69 aa)). Basic residues predominate over residues 167 to 180 (QFKKRHPVSGHPKK). Residues 167 to 197 (QFKKRHPVSGHPKKSVVPQSHPTKVPTKSQG) form a disordered region. Residues 183-197 (VPQSHPTKVPTKSQG) are compositionally biased toward polar residues. The HMG box 2 DNA-binding region spans 225 to 291 (RKPPMNAYHK…QYRVKLDLWL (67 aa)). A disordered region spans residues 305 to 394 (AKATCGKRKN…SDSSSTDEDD (90 aa)).

It is found in the cytoplasm. It localises to the nucleus. Its function is as follows. Essential for proliferation of the inner cell mass and trophectodermal cells in peri-implantation development. In Mus musculus (Mouse), this protein is Upstream-binding factor 1-like protein 1.